Here is a 473-residue protein sequence, read N- to C-terminus: Mitochondrial distribution and morphology protein 10 (473 aa).

It belongs to the MDM10 family. Component of the ER-mitochondria encounter structure (ERMES) or MDM complex, composed of MMM1, MDM10, MDM12 and MDM34. Associates with the mitochondrial outer membrane sorting assembly machinery SAM(core) complex.

The protein resides in the mitochondrion outer membrane. Its function is as follows. Component of the ERMES/MDM complex, which serves as a molecular tether to connect the endoplasmic reticulum and mitochondria. Components of this complex are involved in the control of mitochondrial shape and protein biogenesis and may function in phospholipid exchange. MDM10 is involved in the late assembly steps of the general translocase of the mitochondrial outer membrane (TOM complex). Functions in the TOM40-specific route of the assembly of outer membrane beta-barrel proteins, including the association of TOM40 with the receptor TOM22 and small TOM proteins. Can associate with the SAM(core) complex as well as the MDM12-MMM1 complex, both involved in late steps of the major beta-barrel assembly pathway, that is responsible for biogenesis of all outer membrane beta-barrel proteins. May act as a switch that shuttles between both complexes and channels precursor proteins into the TOM40-specific pathway. Plays a role in mitochondrial morphology and in the inheritance of mitochondria. In Candida albicans (strain SC5314 / ATCC MYA-2876) (Yeast), this protein is Mitochondrial distribution and morphology protein 10.